Reading from the N-terminus, the 426-residue chain is mRNA cap guanine-N(7) methyltransferase (426 aa).

The mRNA cap 0 methyltransferase domain occupies S138 to V421. Position 147 to 148 (N147 to N148) interacts with mRNA. Residues K151, A169, D191, D220, Q246, and Y251 each contribute to the S-adenosyl-L-methionine site.

The protein belongs to the class I-like SAM-binding methyltransferase superfamily. mRNA cap 0 methyltransferase family.

Its subcellular location is the nucleus. It carries out the reaction a 5'-end (5'-triphosphoguanosine)-ribonucleoside in mRNA + S-adenosyl-L-methionine = a 5'-end (N(7)-methyl 5'-triphosphoguanosine)-ribonucleoside in mRNA + S-adenosyl-L-homocysteine. Its function is as follows. Responsible for methylating the 5'-cap structure of mRNAs. The chain is mRNA cap guanine-N(7) methyltransferase (ABD1) from Kluyveromyces lactis (strain ATCC 8585 / CBS 2359 / DSM 70799 / NBRC 1267 / NRRL Y-1140 / WM37) (Yeast).